A 192-amino-acid chain; its full sequence is uncharacterized protein (192 aa).

To R.meliloti RA0936 and y4nF.

This is an uncharacterized protein from Sinorhizobium fredii (strain NBRC 101917 / NGR234).